The chain runs to 169 residues: Endoribonuclease YbeY (169 aa).

Positions 72 to 95 (GPVAAPRQEPDSPPACRKDSSHAE) are disordered. Residues His-131, His-135, and His-141 each contribute to the Zn(2+) site.

This sequence belongs to the endoribonuclease YbeY family. Zn(2+) serves as cofactor.

Its subcellular location is the cytoplasm. Single strand-specific metallo-endoribonuclease involved in late-stage 70S ribosome quality control and in maturation of the 3' terminus of the 16S rRNA. The chain is Endoribonuclease YbeY from Oleidesulfovibrio alaskensis (strain ATCC BAA-1058 / DSM 17464 / G20) (Desulfovibrio alaskensis).